The following is a 129-amino-acid chain: Thyroid hormone receptor alpha (129 aa).

In terms of domain architecture, NR LBD spans 26–129; that stretch reads AEWELIRMVT…EIMSLRAAVR (104 aa). A 3,3',5-triiodo-L-thyronine-binding site is contributed by Arg91.

The protein belongs to the nuclear hormone receptor family. NR1 subfamily.

The protein resides in the nucleus. Functionally, nuclear hormone receptor that can act as a repressor or activator of transcription. High affinity receptor for thyroid hormones, including triiodothyronine and thyroxine. The polypeptide is Thyroid hormone receptor alpha (thra1) (Sparus aurata (Gilthead sea bream)).